The primary structure comprises 1011 residues: RAS protein activator like-3 (1011 aa).

A disordered region spans residues 1–38 (MDPPSPSRTSQTQPTATSPLTSYRWHTGGGGEKAAGGF). Low complexity predominate over residues 7-22 (SRTSQTQPTATSPLTS). Phosphoserine is present on residues Ser18 and Ser51. Disordered stretches follow at residues 52-136 (HQEP…PVWD), 151-197 (GGEE…GPNQ), and 209-230 (KEKK…GSRE). Over residues 81–95 (SRLRLSKALWGRHKN) the composition is skewed to basic residues. A compositionally biased stretch (acidic residues) spans 100 to 117 (PDPEPEQEAPELEPEPEL). Residues 118–131 (EPPTPQIPEAPTPN) are compositionally biased toward pro residues. Phosphoserine occurs at positions 164, 166, 167, and 170. Residues 179-190 (RDPDRMPGKTEP) are compositionally biased toward basic and acidic residues. Residues 197 to 293 (QVHNVRGLLK…WIEDLRRQFQ (97 aa)) enclose the PH domain. A phosphoserine mark is found at Ser224, Ser228, and Ser231. Thr234 is subject to Phosphothreonine. A C2 domain is found at 284–404 (WIEDLRRQFQ…APAAGLERWF (121 aa)). The Ras-GAP domain occupies 474–682 (GRAQALVTDL…PAMQCFLDQV (209 aa)). 2 disordered regions span residues 756-885 (QVHS…LGTH) and 987-1011 (LSPR…GDTT). A phosphoserine mark is found at Ser787 and Ser790. Residues 792-808 (RRSESWARPRPDEERPL) are compositionally biased toward basic and acidic residues. Polar residues-rich tracts occupy residues 871-882 (QMDQPQDRNQAL) and 987-999 (LSPR…SQPQ). Residues 888 to 988 (VNKLAELQCE…RDAVQSLQLS (101 aa)) adopt a coiled-coil conformation. Ser988 is subject to Phosphoserine.

As to expression, predominantly expressed in cells of hematopoietic lineages.

It is found in the cytoplasm. The protein resides in the cell cortex. In terms of biological role, functions as a Ras GTPase-activating protein. Plays an important role in the expansion and functions of natural killer T (NKT) cells in the liver by negatively regulating RAS activity and the down-stream ERK signaling pathway. The protein is RAS protein activator like-3 (RASAL3) of Homo sapiens (Human).